Consider the following 187-residue polypeptide: Large ribosomal subunit protein uL18 (187 aa).

The protein belongs to the universal ribosomal protein uL18 family. As to quaternary structure, part of the 50S ribosomal subunit. Interacts with proteins L5 and L21e, and attaches the 5S rRNA to the 23S rRNA. Has been cross-linked to L21e.

This is one of 5 proteins that mediate the attachment of the 5S rRNA onto the large ribosomal subunit, where it forms part of the central protuberance and stabilizes the orientation of adjacent RNA domains. The chain is Large ribosomal subunit protein uL18 (rpl18) from Haloarcula marismortui (strain ATCC 43049 / DSM 3752 / JCM 8966 / VKM B-1809) (Halobacterium marismortui).